The sequence spans 474 residues: Proline--tRNA ligase (474 aa).

Belongs to the class-II aminoacyl-tRNA synthetase family. ProS type 3 subfamily. As to quaternary structure, homodimer.

It is found in the cytoplasm. The catalysed reaction is tRNA(Pro) + L-proline + ATP = L-prolyl-tRNA(Pro) + AMP + diphosphate. Functionally, catalyzes the attachment of proline to tRNA(Pro) in a two-step reaction: proline is first activated by ATP to form Pro-AMP and then transferred to the acceptor end of tRNA(Pro). This chain is Proline--tRNA ligase, found in Mycoplasma capricolum subsp. capricolum (strain California kid / ATCC 27343 / NCTC 10154).